The sequence spans 729 residues: Ubiquitin carboxyl-terminal hydrolase BAP1 (729 aa).

One can recognise a UCH catalytic domain in the interval 4–235 (GWLELESDPG…IRFNLMAVVP (232 aa)). The short motif at 56 to 60 (RRSRR) is the Arg-finger motif element. C91 acts as the Nucleophile in catalysis. H169 serves as the catalytic Proton donor. Position 292 is a phosphoserine (S292). The segment at 301 to 351 (APAASEGNHTDGAEEAAGSCAQAPSHSPPNKPKLVVKPPGSSLNGVHPNPT) is disordered. The HBM-like motif motif lies at 363-366 (NHNY). S369 and S395 each carry phosphoserine. 2 disordered regions span residues 372 to 435 (QEEE…SADG) and 464 to 524 (SIKT…SPVT). Residues 395 to 409 (SDDEDDYEDDEEDDV) show a composition bias toward acidic residues. The span at 480–524 (THSQPSPTPSNESTDTASEIGSAFNSPLRSPIRSANPTRPSSPVT) shows a compositional bias: polar residues. T493 carries the phosphothreonine modification. Residues S521, S537, S585, and S597 each carry the phosphoserine modification. The segment at 575 to 623 (LTEGGKGSSPSIRPIQGSQGSSSPVEKEVVEATDSREKTGMVRPGEPLS) is disordered. Residues 582–598 (SSPSIRPIQGSQGSSSP) show a composition bias toward polar residues. The interaction with BRCA1 stretch occupies residues 596 to 721 (SSPVEKEVVE…QRKPDRRKRS (126 aa)). Positions 599–614 (VEKEVVEATDSREKTG) are enriched in basic and acidic residues. The stretch at 636–656 (LKCVEAEIANYEACLKEEVEK) forms a coiled coil. The segment at 642-686 (EIANYEACLKEEVEKRKKFKIDDQRRTHNYDEFICTFISMLAQEG) is interaction with YY1. Residues 670–698 (NYDEFICTFISMLAQEGMLANLVEQNISV) form the ULD domain. The interval 699-701 (RRR) is interaction with nucleosomal DNA forming a DNA clamp with ASXL1. The short motif at 699–722 (RRRQGVSIGRLHKQRKPDRRKRSR) is the Classical bipartite Nuclear localization signal (NLS) element. The disordered stretch occupies residues 703–729 (GVSIGRLHKQRKPDRRKRSRPYKAKRQ). The tract at residues 713-729 (RKPDRRKRSRPYKAKRQ) is positively charged C-terminal extension (CTE). The short motif at 717-724 (RRKRSRPY) is the Non-classical PY-nuclear localization signal (PY-NLS) element.

This sequence belongs to the peptidase C12 family. BAP1 subfamily. In terms of assembly, core component of the polycomb repressive deubiquitinase (PR-DUB) complex, at least composed of BAP1, one of ASXL1, ASXL2 or (probably) ASXL3, and one of MBD5 or MBD6. The PR-DUB core associates with a number of accessory proteins, including FOXK1, FOXK2, KDM1B, HCFC1, YY1 and OGT; KDM1B specifically associates with ASXL2 PR-DUB complexes. The BAP1 deubiquitinase activity is not required for PR-DUB assembly. Homodimerizes (via coiled-coil hinge-region between the UCH and ULD domains) to mediate assembly of 2 copies of the BAP1-ASXL heterodimer into a bisymmetric tetramer; dimerization enhances association with nucleosomes. The PR-DUB complex associates with nucleosomes to mediate deubiquitination of 'lys-120' of histone H2AK118ub1 substrates; the association requires the positively charged C-terminal tail of BAP1. Interacts (via ULD domain) with ASXL1 (via DEUBAD domain); the interaction is direct and forms a ubiquitin binding cleft. The interaction with ASXL1 stabilizes BAP1 but is not required for nucleosome binding. Associates (via C-terminus) with nucleosome and chromatosome complexes through direct interaction with DNA and the histone3/4 dimer; this association displaces the histone-2A C-terminal tail, extending and orienting the H2AK118ub1 substrate towards the BAP1 deubiquitinase active site. Also interacts (via arginine finger) directly with the histone H2A-H2B acidic patch; this interaction is not critical for nucleosome-chromatosome association but may play a role in orienting the H2AK118ub1 substrate towards the PR-DUB complex active site. Interacts with BRCA1 (via the RING finger). Interacts (via HBM-like motif) with HCFC1. Interacts (via a C-terminal region overlapping the ULD domain) with YY1; the interaction is direct and requires the interaction with HCFC1. Interacts (when phosphorylated at Thr-493) with FOXK1. Interacts (when phosphorylated at Thr-493) with FOXK2; leading to recruitment of the PR-DUB complex and repression of FOXK2 target genes. Interacts (via non-classical PY-NLS) with TNPO1/transportin-1 (via HEAT repeats 8-12); the interaction is direct, mediates BAP1 nuclear localization and disrupts BAP1 homodimerization. Interacts (via C-terminus) with KPNA1/importin alpha5 and KPNA2/importin alpha1; these interactions can contribute to BAP1 nuclear localization but are less important than the interaction with TNPO1/transportin-1. The interaction with TNPO1/transportin-1 disrupts homodimerization and blocks ubiquitination by UBE2O. Ubiquitinated: monoubiquitinated at multiple sites within its nuclear localization signal (NLS) BY UBE2O, leading to cytoplasmic retention. Able to mediate autodeubiquitination via intramolecular interactions to counteract cytoplasmic retention. Monoubiquitinated on at least 4 sites near or within its PY-NLS. As to expression, highly expressed in testis, placenta and ovary. Expressed in breast. levels in the placenta increase over the course of pregnancy.

The protein resides in the cytoplasm. The protein localises to the nucleus. Its subcellular location is the chromosome. The catalysed reaction is Thiol-dependent hydrolysis of ester, thioester, amide, peptide and isopeptide bonds formed by the C-terminal Gly of ubiquitin (a 76-residue protein attached to proteins as an intracellular targeting signal).. In terms of biological role, deubiquitinating enzyme that plays a key role in chromatin by mediating deubiquitination of histone H2A and HCFC1. Catalytic component of the polycomb repressive deubiquitinase (PR-DUB) complex, a complex that specifically mediates deubiquitination of histone H2A monoubiquitinated at 'Lys-120' (H2AK119ub1). Does not deubiquitinate monoubiquitinated histone H2B. The PR-DUB complex is an epigenetic regulator of gene expression and acts as a transcriptional coactivator, affecting genes involved in development, cell communication, signaling, cell proliferation and cell viability. Antagonizes PRC1 mediated H2AK119ub1 monoubiquitination. As part of the PR-DUB complex, associates with chromatin enriched in histone marks H3K4me1, H3K4me3, and H3K27Ac, but not in H3K27me3. Recruited to specific gene-regulatory regions by YY1. Acts as a regulator of cell growth by mediating deubiquitination of HCFC1 N-terminal and C-terminal chains, with some specificity toward 'Lys-48'-linked polyubiquitin chains compared to 'Lys-63'-linked polyubiquitin chains. Deubiquitination of HCFC1 does not lead to increase stability of HCFC1. Interferes with the BRCA1 and BARD1 heterodimer activity by inhibiting their ability to mediate ubiquitination and autoubiquitination. It however does not mediate deubiquitination of BRCA1 and BARD1. Able to mediate autodeubiquitination via intramolecular interactions to counteract monoubiquitination at the nuclear localization signal (NLS), thereby protecting it from cytoplasmic sequestration. Negatively regulates epithelial-mesenchymal transition (EMT) of trophoblast stem cells during placental development by regulating genes involved in epithelial cell integrity, cell adhesion and cytoskeletal organization. The chain is Ubiquitin carboxyl-terminal hydrolase BAP1 from Homo sapiens (Human).